A 30-amino-acid chain; its full sequence is Circulin A (30 aa).

Residues 1-30 constitute a cross-link (cyclopeptide (Gly-Asn)); the sequence is GIPCGESCVWIPCISAALGCSCKNKVCYRN. 3 disulfides stabilise this stretch: cysteine 4–cysteine 20, cysteine 8–cysteine 22, and cysteine 13–cysteine 27.

Post-translationally, this is a cyclic peptide. In terms of tissue distribution, expressed in fruit, pedicel, root and stem but not in leaf (at protein level).

Its function is as follows. Probably participates in a plant defense mechanism. The polypeptide is Circulin A (Chassalia chartacea (Chassalia curviflora)).